The primary structure comprises 188 residues: FMN reductase (NADH) RutF (188 aa).

Belongs to the non-flavoprotein flavin reductase family. RutF subfamily.

It carries out the reaction FMNH2 + NAD(+) = FMN + NADH + 2 H(+). Functionally, catalyzes the reduction of FMN to FMNH2 which is used to reduce pyrimidine by RutA via the Rut pathway. In Acinetobacter baylyi (strain ATCC 33305 / BD413 / ADP1), this protein is FMN reductase (NADH) RutF.